A 169-amino-acid polypeptide reads, in one-letter code: Neurotensin/neuromedin N (169 aa).

The N-terminal stretch at 1 to 22 (MRGMNLQLVCLTLLAFSSWSLC) is a signal peptide.

This sequence belongs to the neurotensin family. As to quaternary structure, interacts with NTSR1. Interacts with SORT1. Interacts with SORL1. Neurotensin is cleaved and degraded by Angiotensin-converting enzyme (ACE) and neprilysin (MME).

The protein localises to the secreted. The protein resides in the cytoplasmic vesicle. It is found in the secretory vesicle. Its function is as follows. Neurotensin may play an endocrine or paracrine role in the regulation of fat metabolism. It causes contraction of smooth muscle. The polypeptide is Neurotensin/neuromedin N (Nts) (Mus musculus (Mouse)).